We begin with the raw amino-acid sequence, 119 residues long: Ribonuclease P protein component (119 aa).

It belongs to the RnpA family. In terms of assembly, consists of a catalytic RNA component (M1 or rnpB) and a protein subunit.

It catalyses the reaction Endonucleolytic cleavage of RNA, removing 5'-extranucleotides from tRNA precursor.. Functionally, RNaseP catalyzes the removal of the 5'-leader sequence from pre-tRNA to produce the mature 5'-terminus. It can also cleave other RNA substrates such as 4.5S RNA. The protein component plays an auxiliary but essential role in vivo by binding to the 5'-leader sequence and broadening the substrate specificity of the ribozyme. The chain is Ribonuclease P protein component from Listeria monocytogenes serotype 4b (strain CLIP80459).